Reading from the N-terminus, the 318-residue chain is Methionyl-tRNA formyltransferase (318 aa).

114–117 (SLLP) serves as a coordination point for (6S)-5,6,7,8-tetrahydrofolate.

It belongs to the Fmt family.

The catalysed reaction is L-methionyl-tRNA(fMet) + (6R)-10-formyltetrahydrofolate = N-formyl-L-methionyl-tRNA(fMet) + (6S)-5,6,7,8-tetrahydrofolate + H(+). Attaches a formyl group to the free amino group of methionyl-tRNA(fMet). The formyl group appears to play a dual role in the initiator identity of N-formylmethionyl-tRNA by promoting its recognition by IF2 and preventing the misappropriation of this tRNA by the elongation apparatus. The sequence is that of Methionyl-tRNA formyltransferase from Protochlamydia amoebophila (strain UWE25).